Reading from the N-terminus, the 164-residue chain is Transcription antitermination protein NusB (164 aa).

It belongs to the NusB family.

Functionally, involved in transcription antitermination. Required for transcription of ribosomal RNA (rRNA) genes. Binds specifically to the boxA antiterminator sequence of the ribosomal RNA (rrn) operons. In Chlorobium limicola (strain DSM 245 / NBRC 103803 / 6330), this protein is Transcription antitermination protein NusB.